The primary structure comprises 117 residues: Fluoride-specific ion channel FluC 2 (117 aa).

4 consecutive transmembrane segments (helical) span residues 1-21 (MITILLVMLGGGIGAVLRALI), 33-53 (IPIATSIVNITGSLIIGFMMG), 61-81 (MFPFFVTGVLGGLTTFSTLSS), and 94-114 (IRFVVYSLLQFILGFIACFYG). The Na(+) site is built by glycine 71 and threonine 74.

Belongs to the fluoride channel Fluc/FEX (TC 1.A.43) family.

It localises to the cell membrane. It catalyses the reaction fluoride(in) = fluoride(out). Its activity is regulated as follows. Na(+) is not transported, but it plays an essential structural role and its presence is essential for fluoride channel function. In terms of biological role, fluoride-specific ion channel. Important for reducing fluoride concentration in the cell, thus reducing its toxicity. This chain is Fluoride-specific ion channel FluC 2, found in Staphylococcus epidermidis (strain ATCC 35984 / DSM 28319 / BCRC 17069 / CCUG 31568 / BM 3577 / RP62A).